Consider the following 436-residue polypeptide: Enolase (436 aa).

(2R)-2-phosphoglycerate is bound at residue Q167. Catalysis depends on E209, which acts as the Proton donor. D246, E291, and D318 together coordinate Mg(2+). 4 residues coordinate (2R)-2-phosphoglycerate: K343, R372, S373, and K394. K343 functions as the Proton acceptor in the catalytic mechanism.

It belongs to the enolase family. Component of the RNA degradosome, a multiprotein complex involved in RNA processing and mRNA degradation. Mg(2+) is required as a cofactor.

It localises to the cytoplasm. It is found in the secreted. The protein localises to the cell surface. The enzyme catalyses (2R)-2-phosphoglycerate = phosphoenolpyruvate + H2O. Its pathway is carbohydrate degradation; glycolysis; pyruvate from D-glyceraldehyde 3-phosphate: step 4/5. Catalyzes the reversible conversion of 2-phosphoglycerate (2-PG) into phosphoenolpyruvate (PEP). It is essential for the degradation of carbohydrates via glycolysis. This chain is Enolase, found in Glaesserella parasuis serovar 5 (strain SH0165) (Haemophilus parasuis).